The chain runs to 355 residues: Plasmodial-specific protein LAV1-2 (355 aa).

2 EF-hand domains span residues 151-186 and 217-252; these read EDTN…YADT and NDLA…LGFD. The Ca(2+) site is built by D230, N232, N234, T236, E241, D265, D267, S269, D271, E276, D295, D297, S299, Q301, E306, D332, D334, S336, S338, and E343. 2 EF-hand domains span residues 282-317 and 319-354; these read LCLL…AHIP and SARK…MFHD.

The protein is Plasmodial-specific protein LAV1-2 of Physarum polycephalum (Slime mold).